Consider the following 443-residue polypeptide: Signal recognition particle 54 kDa protein (443 aa).

GTP-binding positions include 107-114, 189-193, and 247-250; these read GVQGSGKT, DTAGR, and TKLD.

Belongs to the GTP-binding SRP family. SRP54 subfamily. In terms of assembly, part of the signal recognition particle protein translocation system, which is composed of SRP and FtsY. Archaeal SRP consists of a 7S RNA molecule of 300 nucleotides and two protein subunits: SRP54 and SRP19.

The protein localises to the cytoplasm. It carries out the reaction GTP + H2O = GDP + phosphate + H(+). Functionally, involved in targeting and insertion of nascent membrane proteins into the cytoplasmic membrane. Binds to the hydrophobic signal sequence of the ribosome-nascent chain (RNC) as it emerges from the ribosomes. The SRP-RNC complex is then targeted to the cytoplasmic membrane where it interacts with the SRP receptor FtsY. The sequence is that of Signal recognition particle 54 kDa protein from Pyrococcus abyssi (strain GE5 / Orsay).